An 87-amino-acid chain; its full sequence is Small ribosomal subunit protein bS18 (87 aa).

Residues 1–10 (MAGKSSGDRR) show a composition bias toward basic and acidic residues. Residues 1 to 23 (MAGKSSGDRRKPLRGAKGGKNAA) form a disordered region.

It belongs to the bacterial ribosomal protein bS18 family. In terms of assembly, part of the 30S ribosomal subunit. Forms a tight heterodimer with protein bS6.

Its function is as follows. Binds as a heterodimer with protein bS6 to the central domain of the 16S rRNA, where it helps stabilize the platform of the 30S subunit. The chain is Small ribosomal subunit protein bS18 from Clavibacter michiganensis subsp. michiganensis (strain NCPPB 382).